A 157-amino-acid polypeptide reads, in one-letter code: Spore germination protein GerT (157 aa).

The protein resides in the spore coat. Involved in spore germination; probably required at the earliest stage of germination. The polypeptide is Spore germination protein GerT (gerT) (Bacillus subtilis (strain 168)).